The following is a 536-amino-acid chain: Metal transporter Nramp2 (536 aa).

The disordered stretch occupies residues 1–37 (MSSPSGGEDSKDDEKDEESNRLLPLSSSSQSQSLQSE). Over residues 22–36 (LLPLSSSSQSQSLQS) the composition is skewed to low complexity. The N-linked (GlcNAc...) asparagine glycan is linked to asparagine 38. 12 consecutive transmembrane segments (helical) span residues 76–96 (LWLF…PGNL), 104–124 (AIAG…GLLI), 161–181 (VALI…IQIL), 185–205 (FLPL…FLFL), 213–233 (LEGV…WMCG), 259–279 (AVGV…SALV), 305–325 (VALF…AKGF), 347–367 (YGGG…AAGQ), 400–420 (SFAI…EASL), 435–455 (IPFA…MGVF), 465–485 (AWTI…DFFI), and 492–512 (LFGF…IYLV).

Belongs to the NRAMP (TC 2.A.55) family.

The protein resides in the membrane. In terms of biological role, probable divalent metal transporter. This is Metal transporter Nramp2 from Populus trichocarpa (Western balsam poplar).